The primary structure comprises 185 residues: F-box protein At1g61340 (185 aa).

The 49-residue stretch at 78–126 (SRELEDLPLDILVRIICGVEHEDLKQLFHVSKTIREATMIAKQSHFAYS) folds into the F-box domain.

This is F-box protein At1g61340 from Arabidopsis thaliana (Mouse-ear cress).